Here is a 932-residue protein sequence, read N- to C-terminus: Isoleucine--tRNA ligase (932 aa).

Positions P57–H67 match the 'HIGH' region motif. E556 provides a ligand contact to L-isoleucyl-5'-AMP. Residues K597 to S601 carry the 'KMSKS' region motif. Position 600 (K600) interacts with ATP. Zn(2+) is bound by residues C891, C894, C911, and C914.

The protein belongs to the class-I aminoacyl-tRNA synthetase family. IleS type 1 subfamily. As to quaternary structure, monomer. Requires Zn(2+) as cofactor.

It localises to the cytoplasm. It carries out the reaction tRNA(Ile) + L-isoleucine + ATP = L-isoleucyl-tRNA(Ile) + AMP + diphosphate. In terms of biological role, catalyzes the attachment of isoleucine to tRNA(Ile). As IleRS can inadvertently accommodate and process structurally similar amino acids such as valine, to avoid such errors it has two additional distinct tRNA(Ile)-dependent editing activities. One activity is designated as 'pretransfer' editing and involves the hydrolysis of activated Val-AMP. The other activity is designated 'posttransfer' editing and involves deacylation of mischarged Val-tRNA(Ile). In Lactiplantibacillus plantarum (strain ATCC BAA-793 / NCIMB 8826 / WCFS1) (Lactobacillus plantarum), this protein is Isoleucine--tRNA ligase.